A 1204-amino-acid chain; its full sequence is Major DNA-binding protein (1204 aa).

A disordered region spans residues Ser-289–Phe-314. A zinc finger lies at Cys-497 to His-510. 2 short sequence motifs (required for filament formation) span residues Phe-841 to Trp-842 and Phe-1146 to Phe-1148. Residues Leu-1177–Ile-1204 are required for nuclear localization.

Belongs to the herpesviridae major DNA-binding protein family. In terms of assembly, homooligomers. Forms double-helical filaments necessary for the formation of replication compartments within the host nucleus. Interacts with the origin-binding protein. Interacts with the helicase primase complex; this interaction stimulates primer synthesis activity of the helicase-primase complex. Interacts with the DNA polymerase. Interacts with the alkaline exonuclease; this interaction increases its nuclease processivity.

It localises to the host nucleus. Plays several crucial roles in viral infection. Participates in the opening of the viral DNA origin to initiate replication by interacting with the origin-binding protein. May disrupt loops, hairpins and other secondary structures present on ssDNA to reduce and eliminate pausing of viral DNA polymerase at specific sites during elongation. Promotes viral DNA recombination by performing strand-transfer, characterized by the ability to transfer a DNA strand from a linear duplex to a complementary single-stranded DNA circle. Can also catalyze the renaturation of complementary single strands. Additionally, reorganizes the host cell nucleus, leading to the formation of prereplicative sites and replication compartments. This process is driven by the protein which can form double-helical filaments in the absence of DNA. The protein is Major DNA-binding protein of Homo sapiens (Human).